The following is a 192-amino-acid chain: Casparian strip membrane protein 2 (192 aa).

Residues 1–31 (MTKDVVVEHGESSKAPLVAAPAASGVGRAAS) are Cytoplasmic-facing. A helical transmembrane segment spans residues 32 to 52 (VADVFLRFLAIVGTIASAISM). The Extracellular segment spans residues 53–79 (GTTNETLPFFTQFIQFEAKYSDLPSFT). An N-linked (GlcNAc...) asparagine glycan is attached at asparagine 56. Residues 80 to 100 (FFVAANAVVCTYLVLSIPLSI) traverse the membrane as a helical segment. The Cytoplasmic segment spans residues 101–112 (VHIVRPRARYSR). A helical membrane pass occupies residues 113 to 133 (LVLVFFDAAMLTLLTAGASAA). Residues 134–166 (AAIVYLAHKGNVRANWFAICQQFDSFCERISGS) are Extracellular-facing. The chain crosses the membrane as a helical span at residues 167-187 (LIGSFAAMVLLIMLIFLSAFA). The Cytoplasmic segment spans residues 188-192 (LARRH).

It belongs to the Casparian strip membrane proteins (CASP) family. As to quaternary structure, homodimer and heterodimers.

Its subcellular location is the cell membrane. Regulates membrane-cell wall junctions and localized cell wall deposition. Required for establishment of the Casparian strip membrane domain (CSD) and the subsequent formation of Casparian strips, a cell wall modification of the root endodermis that determines an apoplastic barrier between the intraorganismal apoplasm and the extraorganismal apoplasm and prevents lateral diffusion. The polypeptide is Casparian strip membrane protein 2 (Panicum virgatum (Blackwell switchgrass)).